We begin with the raw amino-acid sequence, 193 residues long: dTTP/UTP pyrophosphatase (193 aa).

Catalysis depends on D70, which acts as the Proton acceptor.

This sequence belongs to the Maf family. YhdE subfamily. It depends on a divalent metal cation as a cofactor.

Its subcellular location is the cytoplasm. It carries out the reaction dTTP + H2O = dTMP + diphosphate + H(+). The enzyme catalyses UTP + H2O = UMP + diphosphate + H(+). Nucleoside triphosphate pyrophosphatase that hydrolyzes dTTP and UTP. May have a dual role in cell division arrest and in preventing the incorporation of modified nucleotides into cellular nucleic acids. The polypeptide is dTTP/UTP pyrophosphatase (Alcanivorax borkumensis (strain ATCC 700651 / DSM 11573 / NCIMB 13689 / SK2)).